We begin with the raw amino-acid sequence, 496 residues long: Amidophosphoribosyltransferase (496 aa).

A propeptide spanning residues 1 to 21 is cleaved from the precursor; the sequence is MNQSHSFPTDDPLDGDTLHEE. The active-site Nucleophile is Cys-22. The region spanning 22 to 241 is the Glutamine amidotransferase type-2 domain; it reads CGVFGILGHP…NGEVIICEIQ (220 aa).

It in the C-terminal section; belongs to the purine/pyrimidine phosphoribosyltransferase family.

The enzyme catalyses 5-phospho-beta-D-ribosylamine + L-glutamate + diphosphate = 5-phospho-alpha-D-ribose 1-diphosphate + L-glutamine + H2O. It functions in the pathway purine metabolism; IMP biosynthesis via de novo pathway; N(1)-(5-phospho-D-ribosyl)glycinamide from 5-phospho-alpha-D-ribose 1-diphosphate: step 1/2. Its function is as follows. Catalyzes the formation of phosphoribosylamine from phosphoribosylpyrophosphate (PRPP) and glutamine. This is Amidophosphoribosyltransferase from Rhizobium etli (strain ATCC 51251 / DSM 11541 / JCM 21823 / NBRC 15573 / CFN 42).